The sequence spans 450 residues: MVKEYDYIVIGGGSGGIASANRAAMHGAKVILFEGKEVGGTCVNVGCVPKKVMWYGAQVAETLHRYAGEYGFDVTINNFDFATLKANRQAYIDRIHGSFERGFDSNGVERVYEYARFVDPHTVEVAGELYTAPHILIATGGHPLYPNIPGSEYGITSDGFFELDEVPKRTAVIGAGYIAVEVAGVLNALGSDTHLFVRKDRPLRTFDKDIIDVLVDEMAKSGPTLHMHANATEVVKNADDSLTISFDNEETITVDCLIWAVGRAANTSGFGLEKTGVELTERGNIYSDEFENTSVPGIYALGDVTGKLDLTPVAVKAGRQLSERLFNNKVDAKLDYTDVATVVFSHPAIGAIGLTEEKAIAKYGAENIKVYKSSFTPMYTALGDNRQLSTMKLVTLGEDEKIIGLHGIGYGVDEMIQGFSVAIKMGATKADFDNTVAIHPTGSEEFVTMR.

FAD-binding residues include S14, G15, E34, T41, C42, K50, and A115. S14 lines the glutathione pocket. A disulfide bridge links C42 with C47. Positions 175, 178, 181, 198, 204, and 262 each coordinate NADP(+). D303 serves as a coordination point for FAD. D309 is a binding site for NADP(+). An FAD-binding site is contributed by T311. Residue R319 coordinates glutathione. V342 lines the NADP(+) pocket. H439 provides a ligand contact to FAD. Residue H439 is the Proton acceptor of the active site.

It belongs to the class-I pyridine nucleotide-disulfide oxidoreductase family. As to quaternary structure, homodimer. It depends on FAD as a cofactor.

Its subcellular location is the cytoplasm. It catalyses the reaction 2 glutathione + NADP(+) = glutathione disulfide + NADPH + H(+). Catalyzes the reduction of glutathione disulfide (GSSG) to reduced glutathione (GSH). Constitutes the major mechanism to maintain a high GSH:GSSG ratio in the cytosol. In Streptococcus thermophilus, this protein is Glutathione reductase (gor).